The following is a 938-amino-acid chain: AP-4 complex subunit epsilon (938 aa).

HEAT repeat units lie at residues 118–153 (DLIILIVNTIQKDLRSDNYLVVCAALNAICRLINEE), 154–190 (TIPAVLPQVVELLNHQKEAVRKKAIMALHRFHRKSPS), 192–227 (VSHLVSNFRKRLCDNDPGVMGATLCPLFDLISEDVN), 234–272 (SSFVSILKQVTERRLPKSYDYHQMPAPFIQIKLLKIMAL), 321–358 (KLLEAAADAISKFLKSDSHNLKYMGIDGLGRLIKISPD), 359–395 (IAEQHQLAVIDCLEDPDDTLKRKTFELLYKMTKSSNV), 397–431 (VIVDRMIDYMISINDNHYKTEIASRCVELAEQFAP), 454–495 (KVAH…EPKL), 517–556 (YSASYISGKLCDVADAYSSDETVKGYAVSALMKIYAFEIA), and 562–601 (DVLPECQSLIEELLASHSTDLQQRAYELQALLALDARAVE). Disordered stretches follow at residues 690 to 712 (EPSYYSESHQPISTSLVSERESS), 725 to 867 (WGRP…VMGL), 880 to 912 (VDSLLSELSDSSKGNSRTYQPQTSKGPNTKEAL), and 919 to 938 (RQMGVNPTSQNPTLFKDLLG). Positions 694–706 (YSESHQPISTSLV) are enriched in polar residues. Over residues 728–744 (PSYQSTTAASSTTPQAA) the composition is skewed to low complexity. Over residues 764 to 779 (SSYEPKKPEIDPEKQR) the composition is skewed to basic and acidic residues. A compositionally biased stretch (polar residues) spans 808–821 (ANKTATVPKENQTP). Low complexity-rich tracts occupy residues 853–863 (DSSSQDGGSSD) and 880–891 (VDSLLSELSDSS). One copy of the HEAT 11 repeat lies at 874–911 (VTTTTSVDSLLSELSDSSKGNSRTYQPQTSKGPNTKEA). The segment covering 892-906 (KGNSRTYQPQTSKGP) has biased composition (polar residues).

The protein belongs to the adaptor complexes large subunit family. As to quaternary structure, adaptor protein complex 4 (AP-4) is a heterotetramer composed of two large adaptins (epsilon-type subunit and beta-type subunit), a medium adaptin (mu-type subunit) and a small adaptin (sigma-type subunit).

It is found in the golgi apparatus. The protein resides in the trans-Golgi network. The protein localises to the membrane. Its subcellular location is the coated pit. Subunit of novel type of clathrin- or non-clathrin-associated protein coat involved in targeting proteins from the trans-Golgi network (TGN) to the endosomal-lysosomal system. The polypeptide is AP-4 complex subunit epsilon (Arabidopsis thaliana (Mouse-ear cress)).